The sequence spans 213 residues: ABA-inducible protein PHV A1 (213 aa).

Disordered stretches follow at residues 1 to 158 and 182 to 213; these read MASN…KDKT and NTLG…TRNH. The span at 13–23 shows a compositional bias: basic and acidic residues; it reads GETKARTEEKT. 9 LEA 11-mer repeat repeats span residues 27-37, 38-48, 49-59, 60-70, 78-88, 89-99, 111-121, 122-132, and 133-143; these read MGATKQKAGQT, TEATKQKAGET, AEATKQKTGET, AEAAKQKAAEA, AQAAKDKTYET, AQAAKERAAQG, TEAAKQKAAET, TEAAKQKAAEA, and TEAAKQKASDT. Residues 27–143 are 11 X 11 AA tandem repeats of T-E-A-A-K-Q-K-A-A-E-T; sequence MGATKQKAGQ…EAAKQKASDT (117 aa). Composition is skewed to basic and acidic residues over residues 41 to 74, 81 to 98, and 109 to 140; these read TKQK…KDKT, AKDK…RAAQ, and EKTE…KQKA. Low complexity predominate over residues 193–213; the sequence is ATKDATTGATVKDTTTTTRNH.

It belongs to the LEA type 4 family.

The polypeptide is ABA-inducible protein PHV A1 (HVA1) (Hordeum vulgare (Barley)).